The primary structure comprises 344 residues: MIDTLTIVRPDDWHLHLRDGDALADVVGDTARQFGRAIIMPNLKPPVTTTAQARAYRERILAALPAGTRFEPLMTLYLTDNTTPEEVRAARASGFVHGVKLYPAGATTNSDAGVTDLRRCAKTLEAMQDVGMPLLVHGEVTDPTVDIFDREAVFIDTVMQPLRRDFPALKVVFEHITTKHAAEYVRDAQGPVGATITAHHLLYNRNALFVGGIRPHYYCLPVLKRETHRLALVAAATSGHPRFFLGTDSAPHAKGLKEHACGCAGCYTALHAMELYAEAFEDANALDKLEGFASLHGPDFYGLPRNAGTLTLTRSQWQLPAEVPFGEQMLVPLRGGEMLRWKTV.

2 residues coordinate Zn(2+): H14 and H16. Residues 16-18 (HLR) and N42 contribute to the substrate site. K100, H137, and H175 together coordinate Zn(2+). K100 is modified (N6-carboxylysine). H137 contributes to the substrate binding site. L220 contributes to the substrate binding site. Residue D248 coordinates Zn(2+). Residue D248 is part of the active site. Substrate contacts are provided by H252 and A264.

Belongs to the metallo-dependent hydrolases superfamily. DHOase family. Class II DHOase subfamily. As to quaternary structure, homodimer. It depends on Zn(2+) as a cofactor.

The catalysed reaction is (S)-dihydroorotate + H2O = N-carbamoyl-L-aspartate + H(+). Its pathway is pyrimidine metabolism; UMP biosynthesis via de novo pathway; (S)-dihydroorotate from bicarbonate: step 3/3. Functionally, catalyzes the reversible cyclization of carbamoyl aspartate to dihydroorotate. The sequence is that of Dihydroorotase from Ralstonia nicotianae (strain ATCC BAA-1114 / GMI1000) (Ralstonia solanacearum).